A 306-amino-acid polypeptide reads, in one-letter code: Anamorsin homolog (306 aa).

The span at 1–25 (MVPPREDVTVRIVCERRRTAGKEAR) shows a compositional bias: basic and acidic residues. A disordered region spans residues 1 to 51 (MVPPREDVTVRIVCERRRTAGKEARPPPSAKPTPGNTSSHPNAKETHRSNE). Positions 59-190 (KQSHRRSIMA…RRNNTTNSVA (132 aa)) are N-terminal SAM-like domain. The tract at residues 191-218 (TLNFASNNNNGNDLLIDEDNLLTDASNL) is linker. 4 residues coordinate [2Fe-2S] cluster: Cys-236, Cys-242, Cys-245, and Cys-247. A fe-S binding site A region spans residues 236 to 247 (CSGRAPCDDCTC). Residues 252–265 (GAKEGNSEQPKEIK) are compositionally biased toward basic and acidic residues. The disordered stretch occupies residues 252–272 (GAKEGNSEQPKEIKSSSCGKC). Residues Cys-269, Cys-272, Cys-280, and Cys-283 each coordinate [4Fe-4S] cluster. 2 consecutive short sequence motifs (cx2C motif) follow at residues 269–272 (CGKC) and 280–283 (CASC). A fe-S binding site B region spans residues 269 to 283 (CGKCSLGDAFRCASC).

It belongs to the anamorsin family. Monomer. [2Fe-2S] cluster serves as cofactor. Requires [4Fe-4S] cluster as cofactor.

The protein localises to the cytoplasm. It localises to the mitochondrion intermembrane space. Functionally, component of the cytosolic iron-sulfur (Fe-S) protein assembly (CIA) machinery. Required for the maturation of extramitochondrial Fe-S proteins. Part of an electron transfer chain functioning in an early step of cytosolic Fe-S biogenesis, facilitating the de novo assembly of a [4Fe-4S] cluster on the cytosolic Fe-S scaffold complex. Electrons are transferred from NADPH via a FAD- and FMN-containing diflavin oxidoreductase. Together with the diflavin oxidoreductase, also required for the assembly of the diferric tyrosyl radical cofactor of ribonucleotide reductase (RNR), probably by providing electrons for reduction during radical cofactor maturation in the catalytic small subunit. The sequence is that of Anamorsin homolog from Phaeodactylum tricornutum (strain CCAP 1055/1).